Reading from the N-terminus, the 238-residue chain is Purine nucleoside phosphorylase DeoD-type (238 aa).

An a purine D-ribonucleoside-binding site is contributed by histidine 5. Phosphate-binding positions include glycine 21, arginine 25, arginine 44, and 88–91; that span reads RIGT. Residues 180–182 and 204–205 contribute to the a purine D-ribonucleoside site; these read DME and SD. Aspartate 205 serves as the catalytic Proton donor.

The protein belongs to the PNP/UDP phosphorylase family. As to quaternary structure, homohexamer; trimer of homodimers.

The enzyme catalyses a purine D-ribonucleoside + phosphate = a purine nucleobase + alpha-D-ribose 1-phosphate. It carries out the reaction a purine 2'-deoxy-D-ribonucleoside + phosphate = a purine nucleobase + 2-deoxy-alpha-D-ribose 1-phosphate. Its function is as follows. Catalyzes the reversible phosphorolytic breakdown of the N-glycosidic bond in the beta-(deoxy)ribonucleoside molecules, with the formation of the corresponding free purine bases and pentose-1-phosphate. This chain is Purine nucleoside phosphorylase DeoD-type, found in Buchnera aphidicola subsp. Baizongia pistaciae (strain Bp).